The following is a 94-amino-acid chain: Sec-independent protein translocase protein TatA (94 aa).

The helical transmembrane segment at 1–21 (MFGRLGAPEIILILVVIILLF) threads the bilayer. The tract at residues 44 to 94 (AKAMKSEGQESTPAGPPNTDEQPPAQRTIQAAPGDVTSSRPVSEPTDTTKR) is disordered. Over residues 62–72 (TDEQPPAQRTI) the composition is skewed to polar residues.

This sequence belongs to the TatA/E family. As to quaternary structure, the Tat system comprises two distinct complexes: a TatABC complex, containing multiple copies of TatA, TatB and TatC subunits, and a separate TatA complex, containing only TatA subunits. Substrates initially bind to the TatABC complex, which probably triggers association of the separate TatA complex to form the active translocon.

Its subcellular location is the cell membrane. In terms of biological role, part of the twin-arginine translocation (Tat) system that transports large folded proteins containing a characteristic twin-arginine motif in their signal peptide across membranes. TatA could form the protein-conducting channel of the Tat system. The protein is Sec-independent protein translocase protein TatA of Streptomyces avermitilis (strain ATCC 31267 / DSM 46492 / JCM 5070 / NBRC 14893 / NCIMB 12804 / NRRL 8165 / MA-4680).